The sequence spans 250 residues: ATP synthase subunit a (250 aa).

Helical transmembrane passes span 26–46 (FTNA…FLYF), 84–104 (FFPL…LGMF), 114–134 (IIVT…YGFY), 143–163 (VFVP…IEII), 193–213 (FVAS…LPLI), and 216–236 (VALT…FAVL).

It belongs to the ATPase A chain family. As to quaternary structure, F-type ATPases have 2 components, CF(1) - the catalytic core - and CF(0) - the membrane proton channel. CF(1) has five subunits: alpha(3), beta(3), gamma(1), delta(1), epsilon(1). CF(0) has three main subunits: a(1), b(2) and c(9-12). The alpha and beta chains form an alternating ring which encloses part of the gamma chain. CF(1) is attached to CF(0) by a central stalk formed by the gamma and epsilon chains, while a peripheral stalk is formed by the delta and b chains.

Its subcellular location is the cell inner membrane. Its function is as follows. Key component of the proton channel; it plays a direct role in the translocation of protons across the membrane. The chain is ATP synthase subunit a from Rhizobium etli (strain ATCC 51251 / DSM 11541 / JCM 21823 / NBRC 15573 / CFN 42).